The chain runs to 456 residues: tRNA modification GTPase MnmE (456 aa).

Positions 23, 85, and 124 each coordinate (6S)-5-formyl-5,6,7,8-tetrahydrofolate. The region spanning 220–375 is the TrmE-type G domain; the sequence is GLRVLIFGKP…LVSAIQERFV (156 aa). Asparagine 230 contributes to the K(+) binding site. Residues 230 to 235, 249 to 255, and 274 to 277 each bind GTP; these read NVGKSS, TDIPGTT, and DTAG. Serine 234 lines the Mg(2+) pocket. Positions 249, 251, and 254 each coordinate K(+). Threonine 255 contributes to the Mg(2+) binding site. Residue lysine 456 coordinates (6S)-5-formyl-5,6,7,8-tetrahydrofolate.

It belongs to the TRAFAC class TrmE-Era-EngA-EngB-Septin-like GTPase superfamily. TrmE GTPase family. As to quaternary structure, homodimer. Heterotetramer of two MnmE and two MnmG subunits. The cofactor is K(+).

It is found in the cytoplasm. In terms of biological role, exhibits a very high intrinsic GTPase hydrolysis rate. Involved in the addition of a carboxymethylaminomethyl (cmnm) group at the wobble position (U34) of certain tRNAs, forming tRNA-cmnm(5)s(2)U34. The polypeptide is tRNA modification GTPase MnmE (Syntrophotalea carbinolica (strain DSM 2380 / NBRC 103641 / GraBd1) (Pelobacter carbinolicus)).